Here is a 135-residue protein sequence, read N- to C-terminus: Cytochrome b5, seed isoform (135 aa).

The 77-residue stretch at 5–81 folds into the Cytochrome b5 heme-binding domain; the sequence is SKVFTLAEVS…LDEYYVGDID (77 aa). Residues His40 and His64 each contribute to the heme site. Residues 107–127 traverse the membrane as a helical segment; sequence FIVKLLQFLVPLIILGVAFGV.

Belongs to the cytochrome b5 family. As to expression, specifically expressed in developing seeds.

The protein localises to the endoplasmic reticulum membrane. The protein resides in the microsome membrane. Cytochrome b5 is a membrane bound hemoprotein which function as an electron carrier for several membrane bound oxygenases. May play a key role in the modification by desaturation of fatty acids in the endoplasmic reticulum, which in the developing seed is utilized for membrane synthesis and in the developmentally regulated production of large amounts of storage lipids. In Nicotiana tabacum (Common tobacco), this protein is Cytochrome b5, seed isoform.